Here is a 176-residue protein sequence, read N- to C-terminus: Probable non-specific lipid-transfer protein 1 (176 aa).

The N-terminal stretch at 1-37 (MRTVSAPSAVALVVIVAAGLAWTSLASVAPPAPAPGS) is a signal peptide. Disulfide bonds link Cys-41–Cys-89, Cys-51–Cys-66, Cys-67–Cys-112, and Cys-87–Cys-128. Positions 139–176 (QLPVSLRHGPVTGPSDPAHKARLERPQIRVPPPAPEKA) are disordered. Residues 155 to 165 (PAHKARLERPQ) are compositionally biased toward basic and acidic residues. Residues 167–176 (RVPPPAPEKA) are compositionally biased toward pro residues.

Belongs to the plant LTP family.

Plant non-specific lipid-transfer proteins transfer phospholipids as well as galactolipids across membranes. May play a role in wax or cutin deposition in the cell walls of expanding epidermal cells and certain secretory tissues. In Parietaria judaica (Pellitory-of-the-wall), this protein is Probable non-specific lipid-transfer protein 1.